The following is a 101-amino-acid chain: Small ribosomal subunit protein uS14 (101 aa).

This sequence belongs to the universal ribosomal protein uS14 family. In terms of assembly, part of the 30S ribosomal subunit. Contacts proteins S3 and S10.

Its function is as follows. Binds 16S rRNA, required for the assembly of 30S particles and may also be responsible for determining the conformation of the 16S rRNA at the A site. In Aromatoleum aromaticum (strain DSM 19018 / LMG 30748 / EbN1) (Azoarcus sp. (strain EbN1)), this protein is Small ribosomal subunit protein uS14.